The following is a 484-amino-acid chain: HSPB1-associated protein 1 (484 aa).

A disordered region spans residues 1–26 (MAARPGAITNADSASGGGEEEGKHVK). The interaction with HSPB1 stretch occupies residues 88-208 (ETACNYVEAT…EDTPFLYPTR (121 aa)). The region spanning 124-288 (WAYADYKYFV…HQTRVEEAIT (165 aa)) is the JmjC domain. Residues 396–429 (TPSSEEPSSERGGIFENDGEDFVSKNGKSFGKRQ) are disordered.

As to quaternary structure, interacts with CRYAB and HSPB1.

The protein localises to the cytoplasm. Functionally, may play a role in cellular stress response. The chain is HSPB1-associated protein 1 (HSPBAP1) from Bos taurus (Bovine).